We begin with the raw amino-acid sequence, 485 residues long: MVEFEPRSYEDFDPEKRPSFGQALLPIAGMITFLAVGIVLLGLDAQMPLLWGIAFTGVIARYGWGYTWDELFDGISNSIVMGLGAIFILFIIYMLIASWVDAGTIPFIMYWGLEFLTPAVFVPLAALLSFVVATAIGSSWTTAGSLGIALVGIGSGLGIPAPLTAGAILSGVYMGDKQSPLSDTTLLASGVSDVDLWDHVRGMFPNTIIVGVISLALYAVLGLMAETGGTGGTGAEVAQIQGGLAGTYTLSVLVLLPLVITFGLAIKGYPALPSLGAGVFSAAGVSILIQGRGFAEAWQIIYSGTGPKTGVDLVNNLLSTGGLEGSIWVITIVFGALSIGGILEATGVLSVIAHNTAKAVDSVGGATLVTALGPLVINALTADQYMSIVIPGMTFRDLNDEYDLDGTSLSRTLEETGTVSEPMIPWNSGGVFMASALGVPVLSYLPYYFVGILSPILVVIMGFTGWKMYMKDPEESPEESADTAA.

The next 11 membrane-spanning stretches (helical) occupy residues 23–43 (ALLPIAGMITFLAVGIVLLGL), 48–68 (PLLWGIAFTGVIARYGWGYTW), 79–99 (IVMGLGAIFILFIIYMLIASW), 116–136 (LTPAVFVPLAALLSFVVATAI), 148–168 (IALVGIGSGLGIPAPLTAGAI), 203–223 (MFPNTIIVGVISLALYAVLGL), 246–266 (GTYTLSVLVLLPLVITFGLAI), 269–289 (YPALPSLGAGVFSAAGVSILI), 323–343 (LEGSIWVITIVFGALSIGGIL), 362–382 (SVGGATLVTALGPLVINALTA), and 441–461 (VLSYLPYYFVGILSPILVVIM).

It belongs to the NhaC Na(+)/H(+) (TC 2.A.35) antiporter family.

It localises to the cell membrane. The enzyme catalyses L-ornithine(in) + L-arginine(out) = L-ornithine(out) + L-arginine(in). Functionally, uptake of arginine from the medium in exchange for ornithine. The polypeptide is Arginine/ornithine antiporter ArcD (arcD) (Halobacterium salinarum (strain ATCC 700922 / JCM 11081 / NRC-1) (Halobacterium halobium)).